A 52-amino-acid polypeptide reads, in one-letter code: uncharacterized protein (52 aa).

This is an uncharacterized protein from Thermoproteus tenax (TTV1).